We begin with the raw amino-acid sequence, 237 residues long: Cysteine-rich venom protein tigrin (237 aa).

An N-terminal signal peptide occupies residues 1–18; sequence MIVFILLSLAAVLRQSFG. The SCP domain occupies 37-165; that stretch reads VNIHNSFRRS…LYNYFYVCQY (129 aa). Cystine bridges form between Cys74–Cys152, Cys91–Cys166, Cys147–Cys163, Cys185–Cys192, Cys188–Cys197, Cys201–Cys232, Cys210–Cys226, and Cys217–Cys230. In terms of domain architecture, ShKT spans 201–232; the sequence is CTHKDDYNNCNSLVSDCQSDWDKSHCPATCFC.

It belongs to the CRISP family. Expressed by the venom gland.

It is found in the secreted. In terms of biological role, this protein does not inhibit smooth muscle contraction elicited by high potassium levels or caffeine. This chain is Cysteine-rich venom protein tigrin, found in Rhabdophis tigrinus tigrinus (Tiger keelback snake).